The chain runs to 159 residues: 3-dehydroquinate dehydratase (159 aa).

Y22 functions as the Proton acceptor in the catalytic mechanism. Residues N73, H79, and D86 each coordinate substrate. H99 serves as the catalytic Proton donor. Residues 100 to 101 (IS) and R110 each bind substrate.

This sequence belongs to the type-II 3-dehydroquinase family. As to quaternary structure, homododecamer.

It catalyses the reaction 3-dehydroquinate = 3-dehydroshikimate + H2O. Its pathway is metabolic intermediate biosynthesis; chorismate biosynthesis; chorismate from D-erythrose 4-phosphate and phosphoenolpyruvate: step 3/7. Its function is as follows. Catalyzes a trans-dehydration via an enolate intermediate. The protein is 3-dehydroquinate dehydratase of Campylobacter jejuni subsp. jejuni serotype O:6 (strain 81116 / NCTC 11828).